Consider the following 460-residue polypeptide: Oxysterols receptor LXR-beta (460 aa).

Residues 1-14 (MSSPTTSSLDTPLP) are compositionally biased toward low complexity. Residues 1–78 (MSSPTTSSLD…PERKRKKGPA (78 aa)) are disordered. The tract at residues 1 to 85 (MSSPTTSSLD…GPAPKMLGHE (85 aa)) is transactivation AF-1; required for ligand-independent transactivation function. The span at 36–45 (EPWPGGPDPD) shows a compositional bias: pro residues. Positions 84–161 (HELCRVCGDK…AGMREQCVLS (78 aa)) form a DNA-binding region, nuclear receptor. 2 consecutive NR C4-type zinc fingers follow at residues 87–107 (CRVC…CEGC) and 125–149 (CRGG…LRKC). Positions 169–216 (KIRKQQQESQSQSQSPVGPQGSSSSASGPGASPGGSEAGSQGSGEGEG) are disordered. Over residues 175 to 198 (QESQSQSQSPVGPQGSSSSASGPG) the composition is skewed to low complexity. Positions 199-215 (ASPGGSEAGSQGSGEGE) are enriched in gly residues. The segment at 219 to 460 (LTAAQELMIQ…LLSEIWDVHE (242 aa)) is transactivation AF-2; required for ligand-dependent transactivation function; mediates interaction with CCAR2. One can recognise an NR LBD domain in the interval 222–460 (AQELMIQQLV…LLSEIWDVHE (239 aa)). Glycyl lysine isopeptide (Lys-Gly) (interchain with G-Cter in SUMO2) cross-links involve residues Lys-409 and Lys-447.

Belongs to the nuclear hormone receptor family. NR1 subfamily. In terms of assembly, forms a heterodimer with RXR. Interacts with CCAR2 (via N-terminus) in a ligand-independent manner. Interacts (when sumoylated) with GPS2; interaction with GPS2 onto hepatic acute phase protein promoters prevents N-Cor corepressor complex dissociation. Interacts with ABCA12 and ABCA1; this interaction is required for ABCA1 localization to the cell surface and is necessary for its normal activity and stability. Post-translationally, sumoylated by SUMO2 at Lys-409 and Lys-447 during the hepatic acute phase response, leading to promote interaction with GPS2 and prevent N-Cor corepressor complex dissociation. As to expression, ubiquitous.

It is found in the nucleus. Functionally, nuclear receptor that exhibits a ligand-dependent transcriptional activation activity. Binds preferentially to double-stranded oligonucleotide direct repeats having the consensus half-site sequence 5'-AGGTCA-3' and 4-nt spacing (DR-4). Regulates cholesterol uptake through MYLIP-dependent ubiquitination of LDLR, VLDLR and LRP8; DLDLR and LRP8. Interplays functionally with RORA for the regulation of genes involved in liver metabolism. Induces LPCAT3-dependent phospholipid remodeling in endoplasmic reticulum (ER) membranes of hepatocytes, driving SREBF1 processing and lipogenesis. Via LPCAT3, triggers the incorporation of arachidonate into phosphatidylcholines of ER membranes, increasing membrane dynamics and enabling triacylglycerols transfer to nascent very low-density lipoprotein (VLDL) particles. Via LPCAT3 also counteracts lipid-induced ER stress response and inflammation, likely by modulating SRC kinase membrane compartmentalization and limiting the synthesis of lipid inflammatory mediators. Plays an anti-inflammatory role during the hepatic acute phase response by acting as a corepressor: inhibits the hepatic acute phase response by preventing dissociation of the N-Cor corepressor complex. The sequence is that of Oxysterols receptor LXR-beta (NR1H2) from Homo sapiens (Human).